Here is a 102-residue protein sequence, read N- to C-terminus: Large ribosomal subunit protein bL21 (102 aa).

This sequence belongs to the bacterial ribosomal protein bL21 family. Part of the 50S ribosomal subunit. Contacts protein L20.

In terms of biological role, this protein binds to 23S rRNA in the presence of protein L20. The protein is Large ribosomal subunit protein bL21 of Enterococcus faecalis (strain ATCC 700802 / V583).